We begin with the raw amino-acid sequence, 166 residues long: Cytochrome b (166 aa).

Helical transmembrane passes span 15-35 (FKDIVGFIVMIFLLISLVLIN), 77-97 (LGGVIALVLSIAILMILPFYN), 109-129 (INQILFWIMLVTVILLTWIGA), and 136-156 (YVLLGQILTVIYFLYYLINPL).

It belongs to the cytochrome b family. In terms of assembly, the main subunits of complex b-c1 are: cytochrome b, cytochrome c1 and the Rieske protein. Heme serves as cofactor.

The protein localises to the mitochondrion inner membrane. Functionally, component of the ubiquinol-cytochrome c reductase complex (complex III or cytochrome b-c1 complex) that is part of the mitochondrial respiratory chain. The b-c1 complex mediates electron transfer from ubiquinol to cytochrome c. Contributes to the generation of a proton gradient across the mitochondrial membrane that is then used for ATP synthesis. This Drosophila subobscura (Fruit fly) protein is Cytochrome b (mt:Cyt-b).